The chain runs to 377 residues: Succinyl-diaminopimelate desuccinylase (377 aa).

Residue His71 participates in Zn(2+) binding. Asp73 is an active-site residue. Residue Asp102 coordinates Zn(2+). Glu132 (proton acceptor) is an active-site residue. Positions 133, 161, and 346 each coordinate Zn(2+).

This sequence belongs to the peptidase M20A family. DapE subfamily. In terms of assembly, homodimer. Requires Zn(2+) as cofactor. The cofactor is Co(2+).

The catalysed reaction is N-succinyl-(2S,6S)-2,6-diaminopimelate + H2O = (2S,6S)-2,6-diaminopimelate + succinate. It participates in amino-acid biosynthesis; L-lysine biosynthesis via DAP pathway; LL-2,6-diaminopimelate from (S)-tetrahydrodipicolinate (succinylase route): step 3/3. Its function is as follows. Catalyzes the hydrolysis of N-succinyl-L,L-diaminopimelic acid (SDAP), forming succinate and LL-2,6-diaminopimelate (DAP), an intermediate involved in the bacterial biosynthesis of lysine and meso-diaminopimelic acid, an essential component of bacterial cell walls. The chain is Succinyl-diaminopimelate desuccinylase from Rhizorhabdus wittichii (strain DSM 6014 / CCUG 31198 / JCM 15750 / NBRC 105917 / EY 4224 / RW1) (Sphingomonas wittichii).